The sequence spans 466 residues: Exodeoxyribonuclease 7 large subunit (466 aa).

It belongs to the XseA family. As to quaternary structure, heterooligomer composed of large and small subunits.

The protein resides in the cytoplasm. The enzyme catalyses Exonucleolytic cleavage in either 5'- to 3'- or 3'- to 5'-direction to yield nucleoside 5'-phosphates.. Functionally, bidirectionally degrades single-stranded DNA into large acid-insoluble oligonucleotides, which are then degraded further into small acid-soluble oligonucleotides. The protein is Exodeoxyribonuclease 7 large subunit of Vesicomyosocius okutanii subsp. Calyptogena okutanii (strain HA).